The sequence spans 346 residues: Flap endonuclease 1 (346 aa).

The segment at 1 to 100 is N-domain; sequence MGVDIKELVE…KELERRYQIK (100 aa). 7 residues coordinate Mg(2+): Asp29, Asp82, Glu154, Glu156, Asp175, Asp177, and Asp238. Residues 118–260 are I-domain; the sequence is EARIYAQQTS…KALKLVKELK (143 aa). The interval 336–344 is interaction with PCNA; it reads KQQSLESWF.

Belongs to the XPG/RAD2 endonuclease family. FEN1 subfamily. As to quaternary structure, interacts with PCNA. PCNA stimulates the nuclease activity without altering cleavage specificity. Mg(2+) serves as cofactor.

In terms of biological role, structure-specific nuclease with 5'-flap endonuclease and 5'-3' exonuclease activities involved in DNA replication and repair. During DNA replication, cleaves the 5'-overhanging flap structure that is generated by displacement synthesis when DNA polymerase encounters the 5'-end of a downstream Okazaki fragment. Binds the unpaired 3'-DNA end and kinks the DNA to facilitate 5' cleavage specificity. Cleaves one nucleotide into the double-stranded DNA from the junction in flap DNA, leaving a nick for ligation. Also involved in the base excision repair (BER) pathway. Acts as a genome stabilization factor that prevents flaps from equilibrating into structures that lead to duplications and deletions. Also possesses 5'-3' exonuclease activity on nicked or gapped double-stranded DNA. The polypeptide is Flap endonuclease 1 (Thermofilum pendens (strain DSM 2475 / Hrk 5)).